Consider the following 146-residue polypeptide: Snake venom vascular endothelial growth factor toxin TfsvVEGF (146 aa).

Positions 1-24 are cleaved as a signal peptide; it reads MAAYLLAVAILFCIQGWPSGTVQG. Position 25 is a pyrrolidone carboxylic acid (Q25). Disulfide bonds link C38–C80, C69–C115, and C73–C117. The span at 118 to 139 shows a compositional bias: basic and acidic residues; sequence RPRSPGDVNNGKDKRNPEEGGP. The tract at residues 118 to 146 is disordered; sequence RPRSPGDVNNGKDKRNPEEGGPRARFPFV.

This sequence belongs to the PDGF/VEGF growth factor family. Snake venom VEGF subfamily. As to quaternary structure, homodimer; disulfide-linked. Interacts with VEGF receptor-1 (FLT1) with a high affinity, whereas it binds to VEGF receptor-2 (KDR) with a low affinity. Does not bind VEGF receptor-3 (FLT4). As to expression, expressed by the venom gland.

It is found in the secreted. Functionally, snake venom VEGFs may contribute to venom dispersion and prey subjugation by inducing vascular permeability and hypotension. This protein strongly increases vascular permeability, and weakly stimulates angiogenesis. Interacts with VEGF receptor-1 (FLT1) with a high affinity, whereas it binds to VEGF receptor-2 (KDR) with a low affinity. Stimulates autophosphorylation of VEGF receptor-1 (VEGFR-1/FLT1), and VEGF receptor-2 (VEGFR-2/KDR). In Protobothrops flavoviridis (Habu), this protein is Snake venom vascular endothelial growth factor toxin TfsvVEGF.